A 339-amino-acid polypeptide reads, in one-letter code: 1-aminocyclopropane-1-carboxylate deaminase (339 aa).

An N6-(pyridoxal phosphate)lysine modification is found at Lys-52. Ser-79 functions as the Nucleophile in the catalytic mechanism.

Belongs to the ACC deaminase/D-cysteine desulfhydrase family. Homotrimer. It depends on pyridoxal 5'-phosphate as a cofactor.

It carries out the reaction 1-aminocyclopropane-1-carboxylate + H2O = 2-oxobutanoate + NH4(+). Functionally, catalyzes a cyclopropane ring-opening reaction, the irreversible conversion of 1-aminocyclopropane-1-carboxylate (ACC) to ammonia and alpha-ketobutyrate. Allows growth on ACC as a nitrogen source. In Rhizobium leguminosarum bv. viciae, this protein is 1-aminocyclopropane-1-carboxylate deaminase.